The chain runs to 612 residues: MPAYRSRTTTHGRNMAGARGLWRATGMKDSDFGKPIIAVVNSFTQFVPGHVHLKDLGQLVAREIEAAGGVAKEFNTIAVDDGIAMGHDGMLYSLPSRELIADSVEYMVNAHCADAMVCISNCDKITPGMLMASLRLNIPTVFVSGGPMEAGKVVLHGKTHALDLVDAMVAAADEKISDEDVQTIERSACPTCGSCSGMFTANSMNCLTEALGLSLPGNGSTLATHADRKRLFVEAGHLIVDLARRYYEQDDIKALPRTIASKQAFENAMALDIAMGGSTNTVLHILAAAHEGEIDFTMADIDALSRRVPCLSKVAPAKSDVHMEDVHRAGGIMSILGELDKGGLLNRNCPTVHAETLGDAIDRWDITRTTSETVRNFYRAAPGGIPTQVAFSQEARWDELDTDRQNGVIRSVEHPFSRDGGLAVLKGNLAVDGCIVKTAGVDESILKFSGPARVFESQDASVKAILANEVKAGDVVVIRYEGPKGGPGMQEMLYPTSYLKSKGLGKACALITDGRFSGGTSGLSIGHASPEAANGGTIGLVREGDMIDIDIPNRTISLRVDEAELAARRADQDAKGWHPAEVRKRNVTTALKAYAAFATSADRGAVRDLNAR.

Position 81 (Asp-81) interacts with Mg(2+). Cys-122 contributes to the [2Fe-2S] cluster binding site. Residues Asp-123 and Lys-124 each coordinate Mg(2+). Lys-124 carries the post-translational modification N6-carboxylysine. Cys-195 provides a ligand contact to [2Fe-2S] cluster. Mg(2+) is bound at residue Glu-491. Ser-517 serves as the catalytic Proton acceptor.

It belongs to the IlvD/Edd family. Homodimer. [2Fe-2S] cluster serves as cofactor. Mg(2+) is required as a cofactor.

The catalysed reaction is (2R)-2,3-dihydroxy-3-methylbutanoate = 3-methyl-2-oxobutanoate + H2O. It catalyses the reaction (2R,3R)-2,3-dihydroxy-3-methylpentanoate = (S)-3-methyl-2-oxopentanoate + H2O. Its pathway is amino-acid biosynthesis; L-isoleucine biosynthesis; L-isoleucine from 2-oxobutanoate: step 3/4. It participates in amino-acid biosynthesis; L-valine biosynthesis; L-valine from pyruvate: step 3/4. Functionally, functions in the biosynthesis of branched-chain amino acids. Catalyzes the dehydration of (2R,3R)-2,3-dihydroxy-3-methylpentanoate (2,3-dihydroxy-3-methylvalerate) into 2-oxo-3-methylpentanoate (2-oxo-3-methylvalerate) and of (2R)-2,3-dihydroxy-3-methylbutanoate (2,3-dihydroxyisovalerate) into 2-oxo-3-methylbutanoate (2-oxoisovalerate), the penultimate precursor to L-isoleucine and L-valine, respectively. This is Dihydroxy-acid dehydratase from Rhizobium leguminosarum bv. trifolii (strain WSM2304).